We begin with the raw amino-acid sequence, 182 residues long: Ribosome maturation factor RimM (182 aa).

In terms of domain architecture, PRC barrel spans 102-182 (EEGDYYWKDL…TIEVDWDPGF (81 aa)).

It belongs to the RimM family. Binds ribosomal protein uS19.

The protein localises to the cytoplasm. An accessory protein needed during the final step in the assembly of 30S ribosomal subunit, possibly for assembly of the head region. Essential for efficient processing of 16S rRNA. May be needed both before and after RbfA during the maturation of 16S rRNA. It has affinity for free ribosomal 30S subunits but not for 70S ribosomes. The protein is Ribosome maturation factor RimM of Klebsiella pneumoniae (strain 342).